The following is an 802-amino-acid chain: Nuclear polyadenylated RNA-binding protein 3 (802 aa).

Disordered stretches follow at residues Met1–Thr174 and Ala252–Phe293. Residues Ser22–Ser34 are compositionally biased toward low complexity. Positions Asp37 to Lys73 are enriched in acidic residues. Thr86 is modified (phosphothreonine). 2 stretches are compositionally biased toward acidic residues: residues Asp101 to Asn139 and Ala149 to Asp158. Basic and acidic residues predominate over residues Lys159–Thr174. The segment covering Ser260–Ser276 has biased composition (low complexity). The segment covering Asn277–Phe293 has biased composition (basic and acidic residues). The RRM domain maps to Ser330–Ser401. Thr451 carries the phosphothreonine modification. Disordered stretches follow at residues Ile571–Gln675 and Met717–Lys802. Positions Pro575–Gln590 are enriched in pro residues. The span at Tyr593 to Gly614 shows a compositional bias: low complexity. The segment covering Met632–Ser642 has biased composition (polar residues). 2 stretches are compositionally biased toward low complexity: residues Gln651 to Ala661 and Met717 to Ser738. Polar residues predominate over residues Thr745 to Ala754. Pro residues predominate over residues Ser757 to Gln769. Residues Gln770 to Pro785 are compositionally biased toward low complexity.

It is found in the nucleus. The protein localises to the nucleoplasm. In terms of biological role, may be required for packaging pre-mRNAs into ribonucleoprotein structures amenable to efficient nuclear RNA processing. Binds to poly(A)+ RNA. Appears to act in the maintenance of CLN3 mRNA levels. The polypeptide is Nuclear polyadenylated RNA-binding protein 3 (NAB3) (Saccharomyces cerevisiae (strain ATCC 204508 / S288c) (Baker's yeast)).